Consider the following 917-residue polypeptide: MLKPDKMGTLTDFGQIALKWDPKNLEIRTMSVEKTLEPLVLQVTTLVNTKGPSKKKKGKSKRASALVAAVEKATENFIQKGEQIAYENPDITQEMLTAVDEVKKTGDAMSIAAREFSEDPCSSLKRGNMVRAARNLLSAVTRLLILADMVDVHLLLKSLHIVEDDLNKLKNASSQDELMDNMRQFGRNAGELIKQAAKRQQELKDPQLRDDLAAARAMLKKHSTMLLTASKVYVRHPELDLAKVNRDFILKQVCDAVNTISDVAQGKSSQPTDIYSGAGELAAALDDFDEGIVMDPMTYSEKRSRQLLEERLESIISAAALMADADCTRDERRERIVAECNAVRQALQDLLSEYMSNMSQKDNSPGLSRAIDQMCRKTRDLRRQLRKAVVDHVSDSFLETTTPLLDLIEAAKSGNEKKVREKSEIFTKHAEKLVEVANLVCSMSNNEDGVKMVRYAAAQIESLCPQVINAASILTVRPNSKVAQENMTTYRQAWEVQVRILTEAVDDITTIDDFLAVSENHILEDVNKCVMALQVGDARDLRATAGAIQGRSSRVCNVVEAEMDNYEPCIYTKRVLEAVKVLRDQVMMKFDQRVGAAVGALSNNSNKDVDENDFIDASRLVYDGVREIRRAVLMNRSSEDLDTDTEFEPVEDLTLETRSRSSAHTGDQTVDEYPDISGICTAREAMRKMTEEDKQKIAQQVELFRREKLTFDSEVAKWDDTGNDIIFLAKHMCMIMMEMTDFTRGRGPLKTTMDVINAAKKISEAGTKLDKLTREIAEQCPESSTKKDLLAYLQRIALYCHQIQITSKVKADVQNISGELIVSGLDSATSLIQAAKNLMNAVVLTVKYSYVASTKYTRQGTVSSPIVVWKMKAPEKKPLVRPEKPEEVRAKVRKGSQKKVQNPIHALSEFQSPADAV.

A phosphothreonine mark is found at Thr-643 and Thr-645. Ser-659 and Ser-662 each carry phosphoserine. The span at 878 to 890 shows a compositional bias: basic and acidic residues; sequence PLVRPEKPEEVRA. The segment at 878–905 is disordered; that stretch reads PLVRPEKPEEVRAKVRKGSQKKVQNPIH.

The protein belongs to the vinculin/alpha-catenin family. In terms of assembly, interacts with arm/armadillo protein. Rapidly phosphorylated by CK2 and more slowly by CK1.

The protein resides in the cytoplasm. The protein localises to the cytoskeleton. It localises to the cell junction. Its subcellular location is the adherens junction. It is found in the cell membrane. Associates with the cytoplasmic domain of a variety of cadherins. The association of catenins to cadherins produces a complex which is linked to the actin filament network, and which seems to be of primary importance for cadherins cell-adhesion properties. This chain is Catenin alpha, found in Drosophila melanogaster (Fruit fly).